We begin with the raw amino-acid sequence, 262 residues long: MHVNEMRPDEVRALIRKGEITGPTAGMAGGFTQANLVILKKELAFEFLLFCQRNQKPCPILDVTDPGSPVPSITAPDADIRTDFPKYRVYKRGELADEVTDISSLWEDDMVGFLIGCSFTFEQALMNNGIPVRHIEEKRNVPMYQTNIPCVPAGRFQGPMVVSMRPVPEEQAVRAVQVTSRLPAVHGGPVHIGSPEAIGITDIAKPDFGDAVTIKKGEVPVFWACGVTPQAVAMHARPELMITHSPGHMLVTDVRDEQFGVL.

The protein belongs to the D-glutamate cyclase family.

This is Putative hydro-lyase BLi00500/BL02808 from Bacillus licheniformis (strain ATCC 14580 / DSM 13 / JCM 2505 / CCUG 7422 / NBRC 12200 / NCIMB 9375 / NCTC 10341 / NRRL NRS-1264 / Gibson 46).